The primary structure comprises 1203 residues: DNA-directed RNA polymerase subunit beta' (1203 aa).

Residues Cys60, Cys62, Cys75, and Cys78 each contribute to the Zn(2+) site. Positions 449, 451, and 453 each coordinate Mg(2+). Residues Cys818, Cys892, Cys899, and Cys902 each coordinate Zn(2+). Residues Arg1180–Val1203 are disordered. The span at Glu1190–Val1203 shows a compositional bias: acidic residues.

This sequence belongs to the RNA polymerase beta' chain family. The RNAP catalytic core consists of 2 alpha, 1 beta, 1 beta' and 1 omega subunit. When a sigma factor is associated with the core the holoenzyme is formed, which can initiate transcription. The cofactor is Mg(2+). It depends on Zn(2+) as a cofactor.

It catalyses the reaction RNA(n) + a ribonucleoside 5'-triphosphate = RNA(n+1) + diphosphate. In terms of biological role, DNA-dependent RNA polymerase catalyzes the transcription of DNA into RNA using the four ribonucleoside triphosphates as substrates. The chain is DNA-directed RNA polymerase subunit beta' from Oceanobacillus iheyensis (strain DSM 14371 / CIP 107618 / JCM 11309 / KCTC 3954 / HTE831).